Reading from the N-terminus, the 176-residue chain is NAD(P)H-quinone oxidoreductase subunit 6, chloroplastic (176 aa).

Helical transmembrane passes span 10-30 (FLLV…VLLP), 32-52 (PIFS…LYIL), 61-81 (AQLL…VMFM), 92-112 (LWTV…FSLM), and 152-172 (FFLP…GAIS).

Belongs to the complex I subunit 6 family. As to quaternary structure, NDH is composed of at least 16 different subunits, 5 of which are encoded in the nucleus.

It localises to the plastid. The protein resides in the chloroplast thylakoid membrane. It catalyses the reaction a plastoquinone + NADH + (n+1) H(+)(in) = a plastoquinol + NAD(+) + n H(+)(out). The enzyme catalyses a plastoquinone + NADPH + (n+1) H(+)(in) = a plastoquinol + NADP(+) + n H(+)(out). Its function is as follows. NDH shuttles electrons from NAD(P)H:plastoquinone, via FMN and iron-sulfur (Fe-S) centers, to quinones in the photosynthetic chain and possibly in a chloroplast respiratory chain. The immediate electron acceptor for the enzyme in this species is believed to be plastoquinone. Couples the redox reaction to proton translocation, and thus conserves the redox energy in a proton gradient. The protein is NAD(P)H-quinone oxidoreductase subunit 6, chloroplastic (ndhG) of Barbarea verna (Land cress).